Reading from the N-terminus, the 132-residue chain is Small ribosomal subunit protein uS19 (132 aa).

Belongs to the universal ribosomal protein uS19 family.

Protein S19 forms a complex with S13 that binds strongly to the 16S ribosomal RNA. This chain is Small ribosomal subunit protein uS19, found in Korarchaeum cryptofilum (strain OPF8).